We begin with the raw amino-acid sequence, 1019 residues long: MYNRVYKERQEIRTIQGLEASGQFQTASNITDIQIYSINVTPTMSKGGETGETQLRRLMYLSASTEPEKCNAEYLADMAHVATLRNKAIGVIRFLLYSSPFFFQVIEGTDEDLDFLFAKISADPRHERCIVLANGPCTGRMYGEWHMKDSHIDNITNNPAIKTILFQIARSFTSMWSYLPKNAANMLLLGKNPNKQGPEPRSVVLTFIYLVEFSSILAHPGLTEQCADILAAFVEASVRNCEGTWGLVAKFITGTCVAYWPINRAEDALVGLQQLSEDLAVLRSYQPPGSALSRIYSRRGVHYGRALLCNAGFRKADFTLLGDCINTASRITSLSVKLKVPLLLSFEVRCLLGDEMREELERSALHKVKGRDKPVQVYQFNAPELDSALVRAKIEQFNPGRYRALCPVKPYESLHPAQRPPIFDDTPRENQPKLSQVQRRDSLVDRLSLIAKLAFPSSMMAGGEGQLITLTYISQAAHPMSRFDLASIQRIAFARNESSNITGSLLYVSGLFVQTLDDPKGAVESLYLKIRQDKRHKDVVAVFMAPIDERVYGTPLDMTSATEEMLATFPPLQDVLSQLAKSFISLETYVPSTVVRYLTAGNNPRNLQPVSVEVVMLATDICSFTPLSEKCSLTEVWTICNTFIDACTSAICNEGGEVIKLIGDCVTAYFAPTGADNAVHACQEIVSFSAQLRDAFHDVLDCRSVVACGVGLDFGQVIMAQCGSLRLTEFVVAGEVSARVMAVEALTREAGRAIVITEPVSDRLSAKLRDTGIVPCQEGLHAVLLWYPGPRMGIGCANHQEDHLRVPRRPGPGRHEEGGRRHQRPGPGRPRRGHPFLPQGSTTRPHQFSVQLHPLPKLGTGSSDGGIGVSLHVYSAGRYRQQLHRRQIAAGGQRRSVGPGQDVARATRAHACDAGHQAPDQPANAQYERQFRGGQQRWRTCGIVHSNAFVTGVGLVQQPWLDEGHRPEAPHQSLHPGPGDPSEQHPHRPNRATEPGLLVARQPAVCLHRPEGFAQICTF.

Residues 55 to 148 (LRRLMYLSAS…GRMYGEWHMK (94 aa)) enclose the BLUF 1 domain. In terms of domain architecture, Guanylate cyclase 1 spans 204–332 (VLTFIYLVEF…DCINTASRIT (129 aa)). One can recognise a BLUF 2 domain in the interval 467-559 (LITLTYISQA…RVYGTPLDMT (93 aa)). The 130-residue stretch at 615–744 (VMLATDICSF…EVSARVMAVE (130 aa)) folds into the Guanylate cyclase 2 domain. Disordered regions lie at residues 801–846 (EDHL…TRPH), 887–923 (QIAA…DQPA), and 963–993 (EGHR…NRAT). Over residues 821–834 (RHQRPGPGRPRRGH) the composition is skewed to basic residues.

The protein belongs to the adenylyl cyclase class-4/guanylyl cyclase family. As to quaternary structure, heterotetramer of two alpha and two beta subunits.

The protein resides in the cell projection. It localises to the cilium. Its subcellular location is the flagellum. This is Photoactivated adenylate cyclase subunit alpha-like protein ST- from Euglena gracilis.